The primary structure comprises 800 residues: Nucleolar complex protein 3 homolog (800 aa).

The segment at 37-90 (STIKKYRKEQRKLRQAVKDAVSKKPFPLEDPKSKRPVKGMEREEEDEEDQALPL) is disordered. Residues 40 to 51 (KKYRKEQRKLRQ) show a composition bias toward basic residues. Basic and acidic residues predominate over residues 52-77 (AVKDAVSKKPFPLEDPKSKRPVKGME). The segment covering 78 to 90 (REEEDEEDQALPL) has biased composition (acidic residues). Residue Lys-333 forms a Glycyl lysine isopeptide (Lys-Gly) (interchain with G-Cter in SUMO2) linkage. A coiled-coil region spans residues 450–489 (FKEKRKTLSRMQRKWKKAEEKLERELREAEASESTERKLK).

It belongs to the CBF/MAK21 family.

Its subcellular location is the nucleus. The protein resides in the nucleolus. The sequence is that of Nucleolar complex protein 3 homolog (NOC3L) from Cricetulus griseus (Chinese hamster).